The primary structure comprises 243 residues: Peptidyl-tRNA hydrolase (243 aa).

Tyr-14 contacts tRNA. The active-site Proton acceptor is His-19. TRNA-binding residues include Phe-64, Asn-66, and Asn-112. A disordered region spans residues 188–243; that stretch reads GGKAEEEKPRKDNKTTEKKPAGQSHIHQARNHNQPKVLTTGPMADILKKMFGNKGE. Residues 190–207 are compositionally biased toward basic and acidic residues; it reads KAEEEKPRKDNKTTEKKP.

The protein belongs to the PTH family. Monomer.

The protein resides in the cytoplasm. The catalysed reaction is an N-acyl-L-alpha-aminoacyl-tRNA + H2O = an N-acyl-L-amino acid + a tRNA + H(+). In terms of biological role, hydrolyzes ribosome-free peptidyl-tRNAs (with 1 or more amino acids incorporated), which drop off the ribosome during protein synthesis, or as a result of ribosome stalling. Functionally, catalyzes the release of premature peptidyl moieties from peptidyl-tRNA molecules trapped in stalled 50S ribosomal subunits, and thus maintains levels of free tRNAs and 50S ribosomes. The chain is Peptidyl-tRNA hydrolase from Rhizobium leguminosarum bv. trifolii (strain WSM2304).